The sequence spans 1516 residues: Neurite extension and migration factor (1516 aa).

Over residues 380-405 (LDKKKGKEEGQEDKGVEKKDGKDNGE) the composition is skewed to basic and acidic residues. Disordered regions lie at residues 380–440 (LDKK…GSFS), 589–610 (QKKKKQRNTNTDSIKTPFSQKQ), 1158–1225 (TFND…STKK), 1373–1419 (TPQE…PGYN), and 1437–1479 (LGNN…ESGT). 3 stretches are compositionally biased toward polar residues: residues 596–610 (NTNTDSIKTPFSQKQ), 1158–1170 (TFNDPSGQISTNN), and 1185–1194 (GAMNQSSSQK). The span at 1443-1453 (THKKLYRHKSS) shows a compositional bias: basic residues. Over residues 1456 to 1479 (ALRDEKCKGKHMEREQVHKDESGT) the composition is skewed to basic and acidic residues.

Highly expressed in fetal and adult brain, predominantly in the cerebral cortex and the cerebellum. Also expressed in other tissues but to a lesser extent.

Its subcellular location is the nucleus. It is found in the cytoplasm. Involved in neurite outgrowth by regulating cell-cell adhesion via the N-cadherin signaling pathway. May act by regulating expression of protein-coding genes, such as N-cadherins and integrin beta-1 (ITGB1). The chain is Neurite extension and migration factor from Homo sapiens (Human).